The chain runs to 366 residues: MTAEEFDFSSHSHRRYNPLTDSWILVSPHRAKRPWLGQQEAAYKPTAPLYDPKCYLCPGNKRATGNLNPRYESTYIFPNDYAAVRLDQPILPQNDSNEDNLKNRLLKVQSVRGNCFVICFSPNHNLTIPQMKQSDLVHIVNSWQALTDDLSREARENHKPFKYVQIFENKGTAMGCSNLHPHGQAWCLESIPSEVSQELKSFDKYKREHNTDLFADYVKLESREKSRVVVENESFIVVVPYWAIWPFETLVISKKKLASISQFNQMVKEDLASILKQLTIKYDNLFETSFPYSMGIHQAPLNATGDELSNSWFHMHFYPPLLRSATVRKFLVGFELLGEPQRDLTSEQAAEKLRNLDGQIHYLQRL.

Phosphoserine is present on Ser-27. The Zn(2+) site is built by Cys-54 and Cys-57. Residues Ala-63 and 79-80 (ND) each bind UDP-alpha-D-glucose. Residue His-124 coordinates Zn(2+). Position 169 (Asn-169) interacts with UDP-alpha-D-glucose. Residue His-180 coordinates Zn(2+). His-182 serves as the catalytic Tele-UMP-histidine intermediate. Residue Gln-184 coordinates UDP-alpha-D-glucose. Positions 198, 297, 314, and 316 each coordinate Fe cation. UDP-alpha-D-glucose-binding positions include 329–332 (KFLV) and 334–335 (FE).

It belongs to the galactose-1-phosphate uridylyltransferase type 1 family. Homodimer. Zn(2+) serves as cofactor.

It catalyses the reaction alpha-D-galactose 1-phosphate + UDP-alpha-D-glucose = alpha-D-glucose 1-phosphate + UDP-alpha-D-galactose. Its pathway is carbohydrate metabolism; galactose metabolism. This chain is Galactose-1-phosphate uridylyltransferase (GAL7), found in Saccharomyces cerevisiae (strain ATCC 204508 / S288c) (Baker's yeast).